The sequence spans 430 residues: Asparagine--tRNA ligase (430 aa).

It belongs to the class-II aminoacyl-tRNA synthetase family. As to quaternary structure, homodimer.

It is found in the cytoplasm. It catalyses the reaction tRNA(Asn) + L-asparagine + ATP = L-asparaginyl-tRNA(Asn) + AMP + diphosphate + H(+). The polypeptide is Asparagine--tRNA ligase (Pelotomaculum thermopropionicum (strain DSM 13744 / JCM 10971 / SI)).